A 633-amino-acid polypeptide reads, in one-letter code: 1-deoxy-D-xylulose-5-phosphate synthase (633 aa).

Thiamine diphosphate contacts are provided by residues H72 and 113-115; that span reads GHS. Residue D144 participates in Mg(2+) binding. Residues 145–146, N173, Y284, and E367 each bind thiamine diphosphate; that span reads GA. Residue N173 coordinates Mg(2+).

This sequence belongs to the transketolase family. DXPS subfamily. As to quaternary structure, homodimer. It depends on Mg(2+) as a cofactor. Thiamine diphosphate is required as a cofactor.

It carries out the reaction D-glyceraldehyde 3-phosphate + pyruvate + H(+) = 1-deoxy-D-xylulose 5-phosphate + CO2. Its pathway is metabolic intermediate biosynthesis; 1-deoxy-D-xylulose 5-phosphate biosynthesis; 1-deoxy-D-xylulose 5-phosphate from D-glyceraldehyde 3-phosphate and pyruvate: step 1/1. Its function is as follows. Catalyzes the acyloin condensation reaction between C atoms 2 and 3 of pyruvate and glyceraldehyde 3-phosphate to yield 1-deoxy-D-xylulose-5-phosphate (DXP). This is 1-deoxy-D-xylulose-5-phosphate synthase from Bacillus licheniformis (strain ATCC 14580 / DSM 13 / JCM 2505 / CCUG 7422 / NBRC 12200 / NCIMB 9375 / NCTC 10341 / NRRL NRS-1264 / Gibson 46).